Consider the following 121-residue polypeptide: Basic phospholipase A2 VRV-PL-V (121 aa).

7 disulfide bridges follow: C26/C115, C28/C44, C43/C95, C49/C121, C50/C88, C57/C81, and C75/C86. Residues Y27, G29, and G31 each contribute to the Ca(2+) site. H47 is an active-site residue. D48 is a Ca(2+) binding site. The active site involves D89.

This sequence belongs to the phospholipase A2 family. Group II subfamily. D49 sub-subfamily. In terms of assembly, monomer. Requires Ca(2+) as cofactor. As to expression, expressed by the venom gland.

It localises to the secreted. It carries out the reaction a 1,2-diacyl-sn-glycero-3-phosphocholine + H2O = a 1-acyl-sn-glycero-3-phosphocholine + a fatty acid + H(+). Snake venom phospholipase A2 (PLA2) that has a low enzymatic activity. PLA2 catalyzes the calcium-dependent hydrolysis of the 2-acyl groups in 3-sn-phosphoglycerides. This Daboia russelii (Russel's viper) protein is Basic phospholipase A2 VRV-PL-V.